The sequence spans 387 residues: 26S proteasome regulatory subunit 6B homolog (387 aa).

175-182 is a binding site for ATP; sequence GPPGTGKT.

The protein belongs to the AAA ATPase family. In terms of assembly, the 26S proteasome consists of a 20S proteasome core and two 19S regulatory subunits. The 20S proteasome core is composed of 28 subunits that are arranged in four stacked rings, resulting in a barrel-shaped structure. The two end rings are each formed by seven alpha subunits, and the two central rings are each formed by seven beta subunits. The catalytic chamber with the active sites is on the inside of the barrel.

It is found in the cytoplasm. The protein resides in the nucleus. In terms of biological role, acts as a regulatory subunit of the 26S proteasome which degrades poly-ubiquitinated proteins in the cytoplasm and in the nucleus. It is essential for the regulated turnover of proteins and for the removal of misfolded proteins. The proteasome is a multicatalytic proteinase complex that is characterized by its ability to cleave peptides with Arg, Phe, Tyr, Leu, and Glu adjacent to the leaving group at neutral or slightly basic pH. In Encephalitozoon cuniculi (strain GB-M1) (Microsporidian parasite), this protein is 26S proteasome regulatory subunit 6B homolog.